We begin with the raw amino-acid sequence, 122 residues long: Large ribosomal subunit protein uL14 (122 aa).

The protein belongs to the universal ribosomal protein uL14 family. Part of the 50S ribosomal subunit. Forms a cluster with proteins L3 and L19. In the 70S ribosome, L14 and L19 interact and together make contacts with the 16S rRNA in bridges B5 and B8.

In terms of biological role, binds to 23S rRNA. Forms part of two intersubunit bridges in the 70S ribosome. This Azoarcus sp. (strain BH72) protein is Large ribosomal subunit protein uL14.